The sequence spans 196 residues: Imidazole glycerol phosphate synthase subunit HisH (196 aa).

The Glutamine amidotransferase type-1 domain maps to 2 to 196; the sequence is KATLINYGVG…LRNFYSWVKR (195 aa). Residue cysteine 76 is the Nucleophile of the active site. Residues histidine 175 and glutamate 177 contribute to the active site.

Heterodimer of HisH and HisF.

It is found in the cytoplasm. The enzyme catalyses 5-[(5-phospho-1-deoxy-D-ribulos-1-ylimino)methylamino]-1-(5-phospho-beta-D-ribosyl)imidazole-4-carboxamide + L-glutamine = D-erythro-1-(imidazol-4-yl)glycerol 3-phosphate + 5-amino-1-(5-phospho-beta-D-ribosyl)imidazole-4-carboxamide + L-glutamate + H(+). It catalyses the reaction L-glutamine + H2O = L-glutamate + NH4(+). Its pathway is amino-acid biosynthesis; L-histidine biosynthesis; L-histidine from 5-phospho-alpha-D-ribose 1-diphosphate: step 5/9. IGPS catalyzes the conversion of PRFAR and glutamine to IGP, AICAR and glutamate. The HisH subunit catalyzes the hydrolysis of glutamine to glutamate and ammonia as part of the synthesis of IGP and AICAR. The resulting ammonia molecule is channeled to the active site of HisF. This chain is Imidazole glycerol phosphate synthase subunit HisH, found in Sulfurisphaera tokodaii (strain DSM 16993 / JCM 10545 / NBRC 100140 / 7) (Sulfolobus tokodaii).